The chain runs to 389 residues: Phospho-N-acetylmuramoyl-pentapeptide-transferase (389 aa).

A run of 11 helical transmembrane segments spans residues 25-45, 74-94, 97-117, 134-154, 167-187, 190-210, 222-242, 259-279, 286-306, 311-331, and 366-386; these read RAVM…PWVI, MGGV…CDWG, FIWV…VDDY, FFWQ…SVSE, WIEG…VPFF, VSYP…IVGS, GLVI…AYVM, AGEL…FLWF, VFMG…VAVI, IVLF…MLQV, and QVTV…LSSL.

The protein belongs to the glycosyltransferase 4 family. MraY subfamily. Requires Mg(2+) as cofactor.

It localises to the cell inner membrane. It catalyses the reaction UDP-N-acetyl-alpha-D-muramoyl-L-alanyl-gamma-D-glutamyl-meso-2,6-diaminopimeloyl-D-alanyl-D-alanine + di-trans,octa-cis-undecaprenyl phosphate = di-trans,octa-cis-undecaprenyl diphospho-N-acetyl-alpha-D-muramoyl-L-alanyl-D-glutamyl-meso-2,6-diaminopimeloyl-D-alanyl-D-alanine + UMP. The protein operates within cell wall biogenesis; peptidoglycan biosynthesis. Functionally, catalyzes the initial step of the lipid cycle reactions in the biosynthesis of the cell wall peptidoglycan: transfers peptidoglycan precursor phospho-MurNAc-pentapeptide from UDP-MurNAc-pentapeptide onto the lipid carrier undecaprenyl phosphate, yielding undecaprenyl-pyrophosphoryl-MurNAc-pentapeptide, known as lipid I. The protein is Phospho-N-acetylmuramoyl-pentapeptide-transferase of Cupriavidus metallidurans (strain ATCC 43123 / DSM 2839 / NBRC 102507 / CH34) (Ralstonia metallidurans).